Consider the following 293-residue polypeptide: 4-hydroxy-tetrahydrodipicolinate synthase (293 aa).

Thr-45 provides a ligand contact to pyruvate. The Proton donor/acceptor role is filled by Tyr-133. The Schiff-base intermediate with substrate role is filled by Lys-161. Ile-203 contacts pyruvate.

This sequence belongs to the DapA family. In terms of assembly, homotetramer; dimer of dimers.

It localises to the cytoplasm. It carries out the reaction L-aspartate 4-semialdehyde + pyruvate = (2S,4S)-4-hydroxy-2,3,4,5-tetrahydrodipicolinate + H2O + H(+). It functions in the pathway amino-acid biosynthesis; L-lysine biosynthesis via DAP pathway; (S)-tetrahydrodipicolinate from L-aspartate: step 3/4. Catalyzes the condensation of (S)-aspartate-beta-semialdehyde [(S)-ASA] and pyruvate to 4-hydroxy-tetrahydrodipicolinate (HTPA). This chain is 4-hydroxy-tetrahydrodipicolinate synthase, found in Aliivibrio fischeri (strain ATCC 700601 / ES114) (Vibrio fischeri).